A 290-amino-acid polypeptide reads, in one-letter code: 4-hydroxy-tetrahydrodipicolinate synthase (290 aa).

Pyruvate is bound at residue Thr-46. Tyr-134 (proton donor/acceptor) is an active-site residue. Residue Lys-163 is the Schiff-base intermediate with substrate of the active site. Residue Val-205 coordinates pyruvate.

Belongs to the DapA family. In terms of assembly, homotetramer; dimer of dimers.

Its subcellular location is the cytoplasm. It carries out the reaction L-aspartate 4-semialdehyde + pyruvate = (2S,4S)-4-hydroxy-2,3,4,5-tetrahydrodipicolinate + H2O + H(+). It functions in the pathway amino-acid biosynthesis; L-lysine biosynthesis via DAP pathway; (S)-tetrahydrodipicolinate from L-aspartate: step 3/4. Its function is as follows. Catalyzes the condensation of (S)-aspartate-beta-semialdehyde [(S)-ASA] and pyruvate to 4-hydroxy-tetrahydrodipicolinate (HTPA). The sequence is that of 4-hydroxy-tetrahydrodipicolinate synthase from Bacillus subtilis (strain 168).